A 234-amino-acid polypeptide reads, in one-letter code: Peroxiredoxin-2E, chloroplastic (234 aa).

The transit peptide at 1-70 (MATSLSVSRF…TRSFATTPVT (70 aa)) directs the protein to the chloroplast. The region spanning 73 to 234 (ISVGDKLPDS…SSAEDMLKAL (162 aa)) is the Thioredoxin domain. Serine 82 carries the post-translational modification Phosphoserine. The active-site Cysteine sulfenic acid (-SOH) intermediate is the cysteine 121.

It belongs to the peroxiredoxin family. Prx5 subfamily. In terms of assembly, monomer. Expressed in all tissues but predominantly in buds, siliques and seeds.

It is found in the plastid. It localises to the chloroplast stroma. It carries out the reaction [glutaredoxin]-dithiol + a hydroperoxide = [glutaredoxin]-disulfide + an alcohol + H2O. Functionally, thiol-specific peroxidase that catalyzes the reduction of hydrogen peroxide and organic hydroperoxides to water and alcohols, respectively. Plays a role in cell protection against oxidative stress by detoxifying peroxides. May be involved in chloroplast redox homeostasis. This is Peroxiredoxin-2E, chloroplastic (PRXIIE) from Arabidopsis thaliana (Mouse-ear cress).